The primary structure comprises 365 residues: Cobalt-precorrin-5B C(1)-methyltransferase (365 aa).

The protein belongs to the CbiD family.

The catalysed reaction is Co-precorrin-5B + S-adenosyl-L-methionine = Co-precorrin-6A + S-adenosyl-L-homocysteine. The protein operates within cofactor biosynthesis; adenosylcobalamin biosynthesis; cob(II)yrinate a,c-diamide from sirohydrochlorin (anaerobic route): step 6/10. Functionally, catalyzes the methylation of C-1 in cobalt-precorrin-5B to form cobalt-precorrin-6A. The sequence is that of Cobalt-precorrin-5B C(1)-methyltransferase from Paraburkholderia phytofirmans (strain DSM 17436 / LMG 22146 / PsJN) (Burkholderia phytofirmans).